The chain runs to 181 residues: ATP-dependent protease subunit HslV (181 aa).

Threonine 7 is an active-site residue. 3 residues coordinate Na(+): glycine 164, cysteine 167, and threonine 170.

The protein belongs to the peptidase T1B family. HslV subfamily. As to quaternary structure, a double ring-shaped homohexamer of HslV is capped on each side by a ring-shaped HslU homohexamer. The assembly of the HslU/HslV complex is dependent on binding of ATP.

Its subcellular location is the cytoplasm. The enzyme catalyses ATP-dependent cleavage of peptide bonds with broad specificity.. Its activity is regulated as follows. Allosterically activated by HslU binding. In terms of biological role, protease subunit of a proteasome-like degradation complex believed to be a general protein degrading machinery. The chain is ATP-dependent protease subunit HslV from Shouchella clausii (strain KSM-K16) (Alkalihalobacillus clausii).